The primary structure comprises 171 residues: Co-chaperone protein HscB homolog (171 aa).

Residues 2 to 74 (NHFELFGLPP…ISRAEYLLSQ (73 aa)) form the J domain.

This sequence belongs to the HscB family. Interacts with HscA and stimulates its ATPase activity.

Functionally, co-chaperone involved in the maturation of iron-sulfur cluster-containing proteins. Seems to help targeting proteins to be folded toward HscA. The sequence is that of Co-chaperone protein HscB homolog from Vibrio vulnificus (strain YJ016).